The primary structure comprises 206 residues: MRRFVLDTSVFTNPDVYLRFDEEPMQAISVFLGLARRADAEFYMPGPVYQELCNLRSMDLIGAEFETEVYIRSPRRFSMTIPSEVLYEFIEEVRTRIQRGLRIAEEHARQAGQAESLPPELITQLRERYREAMRRGILDSREDIDVVLLAYELDATLVSADEGMRKFAERIGIKLVNPRYLRGVMQNLAGDDPGHAPPCGPDQPAG.

Positions 187–206 are disordered; that stretch reads NLAGDDPGHAPPCGPDQPAG. Over residues 195–206 the composition is skewed to pro residues; sequence HAPPCGPDQPAG.

This sequence belongs to the HARP family.

It catalyses the reaction Endonucleolytic cleavage of RNA, removing 5'-extranucleotides from tRNA precursor.. Its function is as follows. RNA-free RNase P that catalyzes the removal of the 5'-leader sequence from pre-tRNA to produce the mature 5'-terminus. The sequence is that of RNA-free ribonuclease P from Halorhodospira halophila (strain DSM 244 / SL1) (Ectothiorhodospira halophila (strain DSM 244 / SL1)).